The chain runs to 589 residues: Aspartate--tRNA ligase (589 aa).

An L-aspartate-binding site is contributed by Glu-174. Positions Gln-198–Lys-201 are aspartate. Arg-220 is an L-aspartate binding site. Residues Arg-220 to Glu-222 and Gln-229 each bind ATP. Position 448 (His-448) interacts with L-aspartate. Glu-483 provides a ligand contact to ATP. An L-aspartate-binding site is contributed by Arg-490. Gly-535–Arg-538 is a binding site for ATP.

The protein belongs to the class-II aminoacyl-tRNA synthetase family. Type 1 subfamily. In terms of assembly, homodimer.

It localises to the cytoplasm. It carries out the reaction tRNA(Asp) + L-aspartate + ATP = L-aspartyl-tRNA(Asp) + AMP + diphosphate. Its function is as follows. Catalyzes the attachment of L-aspartate to tRNA(Asp) in a two-step reaction: L-aspartate is first activated by ATP to form Asp-AMP and then transferred to the acceptor end of tRNA(Asp). The polypeptide is Aspartate--tRNA ligase (Xylella fastidiosa (strain M12)).